Here is a 79-residue protein sequence, read N- to C-terminus: Acyl carrier protein (79 aa).

One can recognise a Carrier domain in the interval 2–77 (SEIGERVKKI…DATKFLEKNA (76 aa)). Residue serine 37 is modified to O-(pantetheine 4'-phosphoryl)serine.

It belongs to the acyl carrier protein (ACP) family. In terms of processing, 4'-phosphopantetheine is transferred from CoA to a specific serine of apo-ACP by AcpS. This modification is essential for activity because fatty acids are bound in thioester linkage to the sulfhydryl of the prosthetic group.

Its subcellular location is the cytoplasm. It participates in lipid metabolism; fatty acid biosynthesis. Functionally, carrier of the growing fatty acid chain in fatty acid biosynthesis. The protein is Acyl carrier protein of Afipia carboxidovorans (strain ATCC 49405 / DSM 1227 / KCTC 32145 / OM5) (Oligotropha carboxidovorans).